The chain runs to 431 residues: UDP-N-acetylglucosamine 1-carboxyvinyltransferase (431 aa).

22-23 (KN) contacts phosphoenolpyruvate. Residue Arg92 coordinates UDP-N-acetyl-alpha-D-glucosamine. Asp116 (proton donor) is an active-site residue. UDP-N-acetyl-alpha-D-glucosamine-binding positions include 121-125 (RPIDQ), Asp307, and Ile330.

Belongs to the EPSP synthase family. MurA subfamily.

The protein resides in the cytoplasm. It carries out the reaction phosphoenolpyruvate + UDP-N-acetyl-alpha-D-glucosamine = UDP-N-acetyl-3-O-(1-carboxyvinyl)-alpha-D-glucosamine + phosphate. It functions in the pathway cell wall biogenesis; peptidoglycan biosynthesis. Functionally, cell wall formation. Adds enolpyruvyl to UDP-N-acetylglucosamine. The protein is UDP-N-acetylglucosamine 1-carboxyvinyltransferase of Lactobacillus acidophilus (strain ATCC 700396 / NCK56 / N2 / NCFM).